A 388-amino-acid polypeptide reads, in one-letter code: Adenosine deaminase-like protein (388 aa).

The segment covering 1–13 (MPNNSKHKKKQQR) has biased composition (basic residues). Positions 1–34 (MPNNSKHKKKQQRRQQEAQKKSRAKQIETDKKND) are disordered. Basic and acidic residues predominate over residues 14–34 (RQQEAQKKSRAKQIETDKKND). Histidine 65 and histidine 67 together coordinate Zn(2+). N(6)-methyl-AMP contacts are provided by residues histidine 67, histidine 114, 146–149 (TSPK), aspartate 186, and glycine 218. Histidine 245 lines the Zn(2+) pocket. Residues glutamate 248, aspartate 326, and aspartate 327 each coordinate N(6)-methyl-AMP. The active-site Proton donor is the glutamate 248. Aspartate 326 provides a ligand contact to Zn(2+).

The protein belongs to the metallo-dependent hydrolases superfamily. Adenosine and AMP deaminases family. As to quaternary structure, monomer. Requires Zn(2+) as cofactor.

It catalyses the reaction N(6)-methyl-AMP + H2O + H(+) = IMP + methylamine. In terms of biological role, catalyzes the hydrolysis of the free cytosolic methylated adenosine nucleotide N(6)-methyl-AMP (N6-mAMP) to produce inositol monophosphate (IMP) and methylamine. Is required for the catabolism of cytosolic N6-mAMP, which is derived from the degradation of mRNA containing N6-methylated adenine (m6A). In Caenorhabditis elegans, this protein is Adenosine deaminase-like protein.